Here is a 328-residue protein sequence, read N- to C-terminus: Protoheme IX farnesyltransferase (328 aa).

The next 8 helical transmembrane spans lie at 31 to 51 (IILL…KGEV), 53 to 73 (LFLL…ANAI), 120 to 140 (VFAN…YVGV), 153 to 173 (IVIG…AVTG), 181 to 201 (LLFA…AIYI), 226 to 246 (IWVY…PLHV), 250 to 270 (IYAV…WQLL), and 285 to 305 (YSIY…LPFT).

The protein belongs to the UbiA prenyltransferase family. Protoheme IX farnesyltransferase subfamily.

It is found in the cell inner membrane. It carries out the reaction heme b + (2E,6E)-farnesyl diphosphate + H2O = Fe(II)-heme o + diphosphate. The protein operates within porphyrin-containing compound metabolism; heme O biosynthesis; heme O from protoheme: step 1/1. Converts heme B (protoheme IX) to heme O by substitution of the vinyl group on carbon 2 of heme B porphyrin ring with a hydroxyethyl farnesyl side group. The sequence is that of Protoheme IX farnesyltransferase from Trichodesmium erythraeum (strain IMS101).